The following is a 246-amino-acid chain: 1-(5-phosphoribosyl)-5-[(5-phosphoribosylamino)methylideneamino] imidazole-4-carboxamide isomerase (246 aa).

The Proton acceptor role is filled by Asp7. Residue Asp130 is the Proton donor of the active site.

Belongs to the HisA/HisF family.

It localises to the cytoplasm. The enzyme catalyses 1-(5-phospho-beta-D-ribosyl)-5-[(5-phospho-beta-D-ribosylamino)methylideneamino]imidazole-4-carboxamide = 5-[(5-phospho-1-deoxy-D-ribulos-1-ylimino)methylamino]-1-(5-phospho-beta-D-ribosyl)imidazole-4-carboxamide. The protein operates within amino-acid biosynthesis; L-histidine biosynthesis; L-histidine from 5-phospho-alpha-D-ribose 1-diphosphate: step 4/9. The protein is 1-(5-phosphoribosyl)-5-[(5-phosphoribosylamino)methylideneamino] imidazole-4-carboxamide isomerase of Blochmanniella pennsylvanica (strain BPEN).